Consider the following 256-residue polypeptide: Hydroxyacylglutathione hydrolase (256 aa).

Zn(2+) is bound by residues H54, H56, D58, H59, H113, D136, and H174.

The protein belongs to the metallo-beta-lactamase superfamily. Glyoxalase II family. Monomer. It depends on Zn(2+) as a cofactor.

It carries out the reaction an S-(2-hydroxyacyl)glutathione + H2O = a 2-hydroxy carboxylate + glutathione + H(+). The protein operates within secondary metabolite metabolism; methylglyoxal degradation; (R)-lactate from methylglyoxal: step 2/2. In terms of biological role, thiolesterase that catalyzes the hydrolysis of S-D-lactoyl-glutathione to form glutathione and D-lactic acid. The protein is Hydroxyacylglutathione hydrolase of Cyanothece sp. (strain PCC 7425 / ATCC 29141).